The chain runs to 140 residues: Small ribosomal subunit protein bS16 (140 aa).

Positions 86–140 (TVGKAKQAAKREEEAKQAAKEAAEAKAAAEAEAAAAAEAAKAEDAPDGETESSEG) are disordered. The segment covering 94-114 (AKREEEAKQAAKEAAEAKAAA) has biased composition (basic and acidic residues). Residues 115–124 (EAEAAAAAEA) show a composition bias toward low complexity. The span at 130-140 (APDGETESSEG) shows a compositional bias: acidic residues.

Belongs to the bacterial ribosomal protein bS16 family.

This chain is Small ribosomal subunit protein bS16, found in Parasynechococcus marenigrum (strain WH8102).